Reading from the N-terminus, the 378-residue chain is 3-dehydroquinate synthase (378 aa).

NAD(+) contacts are provided by residues 115–119, 139–140, Lys-152, and Lys-161; these read GVVGD and TS. The Zn(2+) site is built by Glu-194, His-256, and His-275.

Belongs to the sugar phosphate cyclases superfamily. Dehydroquinate synthase family. It depends on Co(2+) as a cofactor. The cofactor is Zn(2+). Requires NAD(+) as cofactor.

The protein resides in the cytoplasm. It catalyses the reaction 7-phospho-2-dehydro-3-deoxy-D-arabino-heptonate = 3-dehydroquinate + phosphate. It functions in the pathway metabolic intermediate biosynthesis; chorismate biosynthesis; chorismate from D-erythrose 4-phosphate and phosphoenolpyruvate: step 2/7. Its function is as follows. Catalyzes the conversion of 3-deoxy-D-arabino-heptulosonate 7-phosphate (DAHP) to dehydroquinate (DHQ). This chain is 3-dehydroquinate synthase, found in Brucella anthropi (strain ATCC 49188 / DSM 6882 / CCUG 24695 / JCM 21032 / LMG 3331 / NBRC 15819 / NCTC 12168 / Alc 37) (Ochrobactrum anthropi).